Consider the following 404-residue polypeptide: Voltage-gated potassium channel subunit beta-3 (404 aa).

A compositionally biased stretch (polar residues) spans 1–14; sequence MQVSIACTEQNLRS. Residues 1 to 77 are disordered; the sequence is MQVSIACTEQ…LRESTGRGTG (77 aa). The span at 28 to 50 shows a compositional bias: gly residues; that stretch reads PGGGNGGPAGGGHGNPPGGGGSG. Residues Thr97, Trp98, Gln104, and Asp126 each contribute to the NADP(+) site. Tyr131 functions as the Proton donor/acceptor in the catalytic mechanism. NADP(+)-binding residues include Asn199, Ser229, Arg230, Gln255, Trp284, Pro286, Leu287, Ala288, Cys289, Lys295, Arg305, Gly364, Ser366, Gln370, and Glu373.

It belongs to the shaker potassium channel beta subunit family. As to quaternary structure, forms heteromultimeric complex with alpha subunits. Interacts with KCNA5 and KCNB2. As to expression, brain specific. Most prominent expression in cerebellum. Weaker signals detected in cortex, occipital lobe, frontal lobe and temporal lobe. Not detected in spinal cord, heart, lung, liver, kidney, pancreas, placenta and skeletal muscle.

The protein resides in the cytoplasm. Its function is as follows. Regulatory subunit of the voltage-gated potassium (Kv) channels composed of pore-forming and potassium-conducting alpha subunits and of regulatory beta subunit. The beta-3/KCNAB3 subunit may mediate closure of potassium channels. Increases inactivation of Kv1.5/KCNA5 alpha subunit-containing channels. May display nicotinamide adenine dinucleotide phosphate (NADPH)-dependent aldoketoreductase activity. The binding of oxidized and reduced NADP(H) cofactors may be required for the regulation of potassium channel activity. The polypeptide is Voltage-gated potassium channel subunit beta-3 (Homo sapiens (Human)).